A 379-amino-acid polypeptide reads, in one-letter code: Glutamate 5-kinase (379 aa).

K15 lines the ATP pocket. Residues S56, D143, and N155 each coordinate substrate. 175–176 (SD) is an ATP binding site. The region spanning 281-358 (KGTLTIDAGA…CDAAQILGIS (78 aa)) is the PUA domain.

The protein belongs to the glutamate 5-kinase family.

The protein localises to the cytoplasm. The enzyme catalyses L-glutamate + ATP = L-glutamyl 5-phosphate + ADP. It functions in the pathway amino-acid biosynthesis; L-proline biosynthesis; L-glutamate 5-semialdehyde from L-glutamate: step 1/2. Catalyzes the transfer of a phosphate group to glutamate to form L-glutamate 5-phosphate. This chain is Glutamate 5-kinase, found in Nitrobacter hamburgensis (strain DSM 10229 / NCIMB 13809 / X14).